Reading from the N-terminus, the 77-residue chain is Delta-conotoxin GmVIA (77 aa).

The N-terminal stretch at 1-22 (MKLTCMMIVAVLFLTAWTFVTA) is a signal peptide. The propeptide occupies 23-48 (DDSGNGMEILFPKAGHEMENLEVSNR). 3 disulfides stabilise this stretch: cysteine 52–cysteine 67, cysteine 59–cysteine 72, and cysteine 66–cysteine 76.

Belongs to the conotoxin O1 superfamily. In terms of tissue distribution, expressed by the venom duct.

The protein localises to the secreted. In terms of biological role, delta-conotoxins bind to site 6 of voltage-gated sodium channels (Nav) and inhibit the inactivation process. This toxin shows weak activity on rNav1.2/SCN2A (EC(50)=2.5 uM) and rNav1.4/SCN4A (EC(50)=4.8 uM). In vivo, injection of this peptide in the head region of garden snail induces retraction of the head and body into shell. This is followed by secretion of viscous green slime and a convulsive undulation into and out of the shell. No apparent biological activity was observed when a much greater dose of peptide was injected intraperitoneally into mice. The sequence is that of Delta-conotoxin GmVIA from Conus gloriamaris (Glory-of-the-Sea cone).